A 295-amino-acid polypeptide reads, in one-letter code: Ornithine carbamoyltransferase, catabolic (295 aa).

Carbamoyl phosphate is bound by residues 49 to 52 (STRT), Gln76, Arg100, and 127 to 130 (HPCQ). L-ornithine contacts are provided by residues Asn155, Asp213, and 217 to 218 (SM). Carbamoyl phosphate-binding positions include 253-254 (CL) and Arg281.

Belongs to the aspartate/ornithine carbamoyltransferase superfamily. OTCase family. As to quaternary structure, homohexamer.

Its subcellular location is the cytoplasm. The enzyme catalyses carbamoyl phosphate + L-ornithine = L-citrulline + phosphate + H(+). It functions in the pathway amino-acid degradation; L-arginine degradation via ADI pathway; carbamoyl phosphate from L-arginine: step 2/2. With respect to regulation, arginine lead to a slight activation. Inhibited by all nucleotide phosphates. Its function is as follows. Reversibly catalyzes the transfer of the carbamoyl group from carbamoyl phosphate (CP) to the N(epsilon) atom of ornithine (ORN) to produce L-citrulline. The protein is Ornithine carbamoyltransferase, catabolic (arcB) of Halobacterium salinarum (strain ATCC 700922 / JCM 11081 / NRC-1) (Halobacterium halobium).